Reading from the N-terminus, the 273-residue chain is Co-chaperone protein DjlA (273 aa).

Over 1 to 6 the chain is Periplasmic; it reads MHYWGK. The chain crosses the membrane as a helical span at residues 7–31; sequence LLGLIFGVVSGAGFWGIVIGLFIGH. Residues 32–273 lie on the Cytoplasmic side of the membrane; the sequence is MLDRASVRGN…DLIKKEKGFK (242 aa). Positions 207-273 constitute a J domain; it reads DACKVLGVRE…DLIKKEKGFK (67 aa).

Homodimer.

Its subcellular location is the cell inner membrane. Regulatory DnaK co-chaperone. Direct interaction between DnaK and DjlA is needed for the induction of the wcaABCDE operon, involved in the synthesis of a colanic acid polysaccharide capsule, possibly through activation of the RcsB/RcsC phosphotransfer signaling pathway. The colanic acid capsule may help the bacterium survive conditions outside the host. The sequence is that of Co-chaperone protein DjlA from Photorhabdus laumondii subsp. laumondii (strain DSM 15139 / CIP 105565 / TT01) (Photorhabdus luminescens subsp. laumondii).